The following is a 756-amino-acid chain: Ent-kaurene synthase, chloroplastic (756 aa).

Residues Asp507 and Asp511 each coordinate Mg(2+). Positions 507 to 511 match the DDXXD motif motif; the sequence is DDFFD. The chain crosses the membrane as a helical span at residues 606 to 622; that stretch reads YVSFALGPIVLPCLYLV. Positions 651, 655, and 659 each coordinate Mg(2+).

The protein belongs to the terpene synthase family. Mg(2+) serves as cofactor. As to expression, present in both leaves and flowers.

It is found in the plastid. The protein resides in the chloroplast membrane. It carries out the reaction ent-copalyl diphosphate = ent-kaur-16-ene + diphosphate. The protein operates within plant hormone biosynthesis; gibberellin biosynthesis. In terms of biological role, involved in the biosynthesis of labdane-type diterpenoid including marrubiin and other labdane-related furanoid diterpenoids with potential applications as anti-diabetics, analgesics or vasorelaxants. Terpene synthase that produces ent-kaurene from ent-copalyl diphosphate (ent-CPP). In Marrubium vulgare (White horehound), this protein is Ent-kaurene synthase, chloroplastic.